Consider the following 190-residue polypeptide: Threonylcarbamoyl-AMP synthase (190 aa).

Residues 7–190 (LGSIAQAVDV…ALTGERFRQG (184 aa)) form the YrdC-like domain.

The protein belongs to the SUA5 family. TsaC subfamily.

It localises to the cytoplasm. It catalyses the reaction L-threonine + hydrogencarbonate + ATP = L-threonylcarbamoyladenylate + diphosphate + H2O. Its function is as follows. Required for the formation of a threonylcarbamoyl group on adenosine at position 37 (t(6)A37) in tRNAs that read codons beginning with adenine. Catalyzes the conversion of L-threonine, HCO(3)(-)/CO(2) and ATP to give threonylcarbamoyl-AMP (TC-AMP) as the acyladenylate intermediate, with the release of diphosphate. The chain is Threonylcarbamoyl-AMP synthase from Enterobacter sp. (strain 638).